Consider the following 251-residue polypeptide: Protein unc-119 homolog B (251 aa).

A compositionally biased stretch (polar residues) spans 1-13; sequence MSGSNPKAATAGS. Positions 1–56 are disordered; sequence MSGSNPKAATAGSQAGPGGLVAGKEEKKKAGGGVLNRLKARRQGPPHTPDDGSGAA. Ser2 carries the post-translational modification N-acetylserine. An N6-acetyllysine modification is found at Lys24. Tyr142 serves as a coordination point for tetradecanoate.

It belongs to the PDE6D/unc-119 family. In terms of assembly, found in a complex with ARL3, RP2 and UNC119B; RP2 induces hydrolysis of GTP ARL3 in the complex, leading to the release of UNC119B. Interacts with NPHP3 (when myristoylated). Interacts with CYS1 (when myristoylated). Interacts with MACIR; interaction only takes place when UNC119B is not liganded with myristoylated proteins.

The protein localises to the cell projection. Its subcellular location is the cilium. Functionally, myristoyl-binding protein that acts as a cargo adapter: specifically binds the myristoyl moiety of a subset of N-terminally myristoylated proteins and is required for their localization. Binds myristoylated NPHP3 and plays a key role in localization of NPHP3 to the primary cilium membrane. Does not bind all myristoylated proteins. Probably plays a role in trafficking proteins in photoreceptor cells. The polypeptide is Protein unc-119 homolog B (Unc119b) (Mus musculus (Mouse)).